The following is a 254-amino-acid chain: Thiamine thiazole synthase (254 aa).

NAD(+) contacts are provided by residues serine 36, glutamate 55–lysine 56, glycine 63, valine 127, and histidine 154–aspartate 156. Positions 156 and 171 each coordinate Fe cation. Methionine 219 lines the NAD(+) pocket. Arginine 229 contacts glycine.

This sequence belongs to the THI4 family. Homooctamer; tetramer of dimers. Fe(2+) serves as cofactor.

The catalysed reaction is hydrogen sulfide + glycine + NAD(+) = ADP-5-ethyl-4-methylthiazole-2-carboxylate + nicotinamide + 3 H2O + H(+). Its pathway is cofactor biosynthesis; thiamine diphosphate biosynthesis. Involved in the biosynthesis of the thiazole moiety of thiamine. Catalyzes the conversion of NAD and glycine to adenosine diphosphate 5-(2-hydroxyethyl)-4-methylthiazole-2-carboxylate (ADT), an adenylated thiazole intermediate, using free sulfide as a source of sulfur. The chain is Thiamine thiazole synthase from Methanoculleus marisnigri (strain ATCC 35101 / DSM 1498 / JR1).